Consider the following 397-residue polypeptide: MQGISVTGLVKRGWMVRSVFDTIDGIDQLGEQLASVTVTLDKLAAIQPQLVALLPDEIASQQINRELALANYATMSGIYAQTAALIENAAAMGQAFDAAKNDDSFYLPPEAFDNPDFQRGLKLFLSADGKAARMIISHEGDPATPEGISHIDAIKQAAHEAVKGTPMAGAGIYLAGTAATFKDIQDGATYDLLIAGIAALSLILLIMMIITRSLVAALVIVGTVALSLGASFGLSVLVWQHLLGIQLYWIVLALAVILLLAVGSDYNLLLISRFKEEIGAGLNTGIIRAMAGTGGVVTAAGLVFAATMSSFVFSDLRVLGQIGTTIGLGLLFDTLVVRAFMTPSIAVLLGRWFWWPQRVRPRPASRMLRPYGPRPVVRELLLREGNDDPRTQVATHR.

The next 5 helical transmembrane spans lie at 190–210 (YDLL…MMII), 214–234 (LVAA…SFGL), 242–262 (LLGI…LLAV), 293–313 (TGGV…SFVF), and 328–348 (LGLL…IAVL).

Belongs to the resistance-nodulation-cell division (RND) (TC 2.A.6) family. MmpL subfamily.

The protein localises to the cell membrane. The chain is Probable transport protein MmpL6 (mmpL6) from Mycobacterium tuberculosis (strain CDC 1551 / Oshkosh).